Here is a 118-residue protein sequence, read N- to C-terminus: Non-specific lipid-transfer protein (118 aa).

The N-terminal stretch at methionine 1 to glycine 27 is a signal peptide. Intrachain disulfides connect cysteine 30-cysteine 75, cysteine 40-cysteine 54, cysteine 55-cysteine 100, and cysteine 77-cysteine 114.

This sequence belongs to the plant LTP family. Disulfide bonds.

Plant non-specific lipid-transfer proteins transfer phospholipids as well as galactolipids across membranes. May play a role in wax or cutin deposition in the cell walls of expanding epidermal cells and certain secretory tissues. This is Non-specific lipid-transfer protein from Apium graveolens (Celery).